The primary structure comprises 399 residues: Transferrin receptor subunit ESAG6 (399 aa).

The first 17 residues, 1–17 (MRFWFVLLALLGKEIYA), serve as a signal peptide directing secretion. 2 N-linked (GlcNAc...) asparagine glycosylation sites follow: Asn26 and Asn110. Disulfide bonds link Cys34–Cys161, Cys84–Cys312, and Cys144–Cys215. Asn235, Asn250, and Asn360 each carry an N-linked (GlcNAc...) asparagine glycan. A lipid anchor (GPI-anchor amidated asparagine) is attached at Asn376. Positions 377 to 399 (AAAIHLSVSTAALCRSALLLGVL) are cleaved as a propeptide — removed in mature form.

In terms of assembly, heterodimer composed of ESAG6 and ESAG7. N-glycosylated. Glycosylation is dispensable for heterodimer formation and host transferrin binding.

Its subcellular location is the cell membrane. The protein resides in the flagellar pocket. Functionally, transferrin receptor subunit involved in receptor-mediated acquisition of iron from the environment by binding host TF/transferrin. In Trypanosoma brucei brucei, this protein is Transferrin receptor subunit ESAG6.